The primary structure comprises 211 residues: Large ribosomal subunit protein uL4 (211 aa).

A disordered region spans residues 48-89 (KRAGTASTKTRVEVRGGGAKPWRQKGTGRARAGSRTSPLWRG).

The protein belongs to the universal ribosomal protein uL4 family. In terms of assembly, part of the 50S ribosomal subunit.

Functionally, one of the primary rRNA binding proteins, this protein initially binds near the 5'-end of the 23S rRNA. It is important during the early stages of 50S assembly. It makes multiple contacts with different domains of the 23S rRNA in the assembled 50S subunit and ribosome. Forms part of the polypeptide exit tunnel. This chain is Large ribosomal subunit protein uL4, found in Desulfotalea psychrophila (strain LSv54 / DSM 12343).